The following is a 1057-amino-acid chain: MSSQQFPRSGAPPPGLGANPPTGPASGTAGLIAPAATTSDESVRDPEVAPRDQHLGPGGPAPPREEKQEPVVVRPYPQVQMLAPHHPVPPGAPVTVAAPPAHLAPAVPLSFSDGLMKPPLKPTMPSRPIAPAPPSTLSAPTKVPGQVTVTMESSIPQAPTIPVATISGQQGHPSNLHHIMATNVQMSIIRSSAPGPPLHIGASHLPRGAAAAAVMSSSKVTTVLRPASQLPNAATAQPAVQHIIHQPIQSRPPVTTSSTIPPAVVATVSATRAQSPVITTTAAHATESTLSRPTLSIQQHPPSAAISIQRPAQPRDAATRITLPSHPAIGAQKQQLHTMAQKTIFSTGTPVAAATVAPILATNTIASATTAGSVSHTQAPTSTIVTMTMPSHSSHATAVTTSNIPVAKVVPQQITHTSPRIQSDYTAERSNLIPLSSHRASPNPVAMETRNDNRQSVPVQFQYFLPTYPPSAYPLTAHTYTPITSSVSTIRQYPVSAQAPNSAITAQTGVGVASTVHLNPMQLMTVDASHARHIQGIQPAPISAQGIQPAPIGAQGIQPAPIGTQGLHPAAPIGTQGLQPAPISAQQPQADTKTSVVLADGATIVANPISNTFNTASAATTVVQTHSQSASAPAQGSSPRPSILRKKPTTDGLAVRKSLIPPQPPEVASTRVENTMRSTSGSPRPAGAKPKPEIHVSMATPVTVSMEAVSNQGSEQPTIAVPPSSQQPPSAIPTIIAAASPTSQPAAALSTIPGAVPAAPPTSTTIVAAPAPPATMSGALSAVLGPVVPEIKIKEEAEPMDIMRPVSAVPPLTTSTVSPSLALLANNLSMPPSDLPPGASPRKKPRKQQHVISTEEGDMMETNSTDDEKSTAKSLLVKAEKRKSPPKEYIDEEGVRYVPVRPRPPITLLRHYRNPWKAAYHHFQRYSDVRVKEEKKAMLQEIANQKGVSCRAQGWKVHLCAAQLLQLTNLEHDVYERLTALQEGLIPKKKAATDDDLHRINELIQGNMQRCKLVMDQINEARDSMLKVLDHKDRVLKLLNKNGTVKKVSKLKRKEKV.

Disordered regions lie at residues 1–68 (MSSQ…EEKQ), 289–314 (TLSR…PAQP), 556–594 (GIQP…DTKT), 624–692 (QTHS…KPKP), and 827–880 (NLSM…VKAE). Residues 41–54 (ESVRDPEVAPRDQH) show a composition bias toward basic and acidic residues. Over residues 289 to 301 (TLSRPTLSIQQHP) the composition is skewed to polar residues. Low complexity-rich tracts occupy residues 579 to 590 (QPAPISAQQPQA) and 624 to 642 (QTHS…PRPS). Over residues 671–682 (RVENTMRSTSGS) the composition is skewed to polar residues.

Belongs to the SAP130 family. Component of a mSin3A corepressor complex that contains SIN3A, SAP130, SUDS3/SAP45, ARID4B/SAP180, HDAC1 and HDAC2.

The protein resides in the nucleus. Acts as a transcriptional repressor. May function in the assembly and/or enzymatic activity of the mSin3A corepressor complex or in mediating interactions between the complex and other regulatory complexes. This chain is Histone deacetylase complex subunit SAP130 (SAP130), found in Gallus gallus (Chicken).